A 203-amino-acid polypeptide reads, in one-letter code: E3 ubiquitin-protein ligase RNF152 (203 aa).

An RING-type zinc finger spans residues 12–55 (CQICFNYYSPRRRPKLLDCKHTCCSVCLQQMRTSQKDVRCPWCR). A necessary for interaction with RRAGA region spans residues 106-165 (ISKERALLPGDMGCRLLPGSQQKSVTVVTIPAEQQPLQGGAPQEAVEEEQDRRGVVKSST). A helical transmembrane segment spans residues 167–187 (SGVCTVILVACVLVFLLGIVL).

Belongs to the RNF152 family. As to quaternary structure, interacts with RRAGA (inactive GDP-bound form); stimulated by amino acid starvation. Interacts with SEC16A. Ubiquitinated. Autoubiquitinated in vitro, leading to its degradation by the proteasome. In terms of tissue distribution, widely expressed.

The protein resides in the lysosome membrane. It catalyses the reaction S-ubiquitinyl-[E2 ubiquitin-conjugating enzyme]-L-cysteine + [acceptor protein]-L-lysine = [E2 ubiquitin-conjugating enzyme]-L-cysteine + N(6)-ubiquitinyl-[acceptor protein]-L-lysine.. It functions in the pathway protein modification; protein ubiquitination. Functionally, E3 ubiquitin-protein ligase that acts as a negative regulator of mTORC1 signaling by mediating ubiquitination of RagA/RRAGA and RHEB. Catalyzes 'Lys-63'-linked polyubiquitination of RagA/RRAGA in response to amino acid starvation, thereby regulating mTORC1 signaling. Also mediates monoubiquitination of RHEB, promoting its association with the TSC-TBC complex and subsequent inhibition. Also mediates 'Lys-48'-linked polyubiquitination of target proteins and their subsequent targeting to the proteasome for degradation. Induces apoptosis when overexpressed. This chain is E3 ubiquitin-protein ligase RNF152, found in Homo sapiens (Human).